The primary structure comprises 451 residues: UDP-N-acetylmuramoylalanine--D-glutamate ligase (451 aa).

118–124 (GTKGKST) serves as a coordination point for ATP.

It belongs to the MurCDEF family.

The protein localises to the cytoplasm. It carries out the reaction UDP-N-acetyl-alpha-D-muramoyl-L-alanine + D-glutamate + ATP = UDP-N-acetyl-alpha-D-muramoyl-L-alanyl-D-glutamate + ADP + phosphate + H(+). It participates in cell wall biogenesis; peptidoglycan biosynthesis. Its function is as follows. Cell wall formation. Catalyzes the addition of glutamate to the nucleotide precursor UDP-N-acetylmuramoyl-L-alanine (UMA). The polypeptide is UDP-N-acetylmuramoylalanine--D-glutamate ligase (Borreliella burgdorferi (strain ZS7) (Borrelia burgdorferi)).